We begin with the raw amino-acid sequence, 308 residues long: Staphylococcal superantigen-like 4 (308 aa).

The first 30 residues, 1-30, serve as a signal peptide directing secretion; it reads MKITTIAKTSLALGLLTTGVITTTTQAANA. Residues 32–117 are disordered; sequence TLSSTKVEAP…TTKQVPTEIN (86 aa). Composition is skewed to polar residues over residues 33 to 47 and 55 to 76; these read LSST…TPPS and SKPN…TANA. Residues 77-93 are compositionally biased toward low complexity; it reads TTPPSTKVTTPPSTNTP. Residues 94–114 are compositionally biased toward polar residues; it reads QPMQSTKSDTPQSPTTKQVPT. The segment at 180 to 278 is sialyl Lewis X-binding; it reads VDVFVVLEEN…VIKMKNGGKY (99 aa).

This sequence belongs to the staphylococcal/streptococcal toxin family.

It is found in the secreted. In terms of biological role, secreted protein that plays a role in immune innate response inhibition by interfering with host TLR2-mediated pathway. The protein is Staphylococcal superantigen-like 4 of Staphylococcus aureus (strain NCTC 8325 / PS 47).